A 247-amino-acid chain; its full sequence is 5'-nucleotidase SurE (247 aa).

D8, D9, S39, and N91 together coordinate a divalent metal cation.

The protein belongs to the SurE nucleotidase family. A divalent metal cation serves as cofactor.

The protein resides in the cytoplasm. The enzyme catalyses a ribonucleoside 5'-phosphate + H2O = a ribonucleoside + phosphate. Its function is as follows. Nucleotidase that shows phosphatase activity on nucleoside 5'-monophosphates. The chain is 5'-nucleotidase SurE from Laribacter hongkongensis (strain HLHK9).